The following is a 712-amino-acid chain: Semaphorin-1A (712 aa).

An N-terminal signal peptide occupies residues 1–20; it reads MVVKILVWSICLIALCHAWM. The Sema domain occupies 21 to 483; sequence PDSSSKLINH…GKDEIRLANL (463 aa). The Extracellular portion of the chain corresponds to 21 to 601; the sequence is PDSSSKLINH…IGGCAVRQQL (581 aa). N-linked (GlcNAc...) asparagine glycosylation is found at asparagine 42 and asparagine 69. Cystine bridges form between cysteine 95–cysteine 105 and cysteine 123–cysteine 132. Asparagine 161 and asparagine 265 each carry an N-linked (GlcNAc...) asparagine glycan. 4 disulfide bridges follow: cysteine 242–cysteine 357, cysteine 266–cysteine 316, cysteine 486–cysteine 503, and cysteine 495–cysteine 512. A helical transmembrane segment spans residues 602–622; that stretch reads VIYTAGTLHIVVVVVSIVGLF. Residues 623-712 lie on the Cytoplasmic side of the membrane; that stretch reads SWLYSGLSVF…TLQKIKKTYI (90 aa).

The protein belongs to the semaphorin family.

It is found in the membrane. In terms of biological role, plays a role in growth cones guidance. The chain is Semaphorin-1A (SEMA-1A) from Tribolium confusum (Confused flour beetle).